A 132-amino-acid chain; its full sequence is Inactive D-aminoacyl-tRNA deacylase (132 aa).

This sequence belongs to the DTD family.

In terms of biological role, a non-functional D-aminoacyl-tRNA deacylase. This Bacillus subtilis (strain 168) protein is Inactive D-aminoacyl-tRNA deacylase.